Consider the following 177-residue polypeptide: Endoribonuclease YbeY (177 aa).

Residues H118, H122, and H128 each contribute to the Zn(2+) site.

The protein belongs to the endoribonuclease YbeY family. Zn(2+) serves as cofactor.

The protein resides in the cytoplasm. Functionally, single strand-specific metallo-endoribonuclease involved in late-stage 70S ribosome quality control and in maturation of the 3' terminus of the 16S rRNA. This chain is Endoribonuclease YbeY, found in Mycolicibacterium paratuberculosis (strain ATCC BAA-968 / K-10) (Mycobacterium paratuberculosis).